Consider the following 61-residue polypeptide: Small ribosomal subunit protein uS14 (61 aa).

Zn(2+) contacts are provided by cysteine 24, cysteine 27, cysteine 40, and cysteine 43.

The protein belongs to the universal ribosomal protein uS14 family. Zinc-binding uS14 subfamily. Part of the 30S ribosomal subunit. Contacts proteins S3 and S10. It depends on Zn(2+) as a cofactor.

Binds 16S rRNA, required for the assembly of 30S particles and may also be responsible for determining the conformation of the 16S rRNA at the A site. This chain is Small ribosomal subunit protein uS14, found in Acetivibrio thermocellus (strain ATCC 27405 / DSM 1237 / JCM 9322 / NBRC 103400 / NCIMB 10682 / NRRL B-4536 / VPI 7372) (Clostridium thermocellum).